The following is a 442-amino-acid chain: Adenylosuccinate synthetase (442 aa).

Residues Gly25–Lys31, Gly53–Thr55, and Lys62 contribute to the GTP site. Asp26 (proton acceptor) is an active-site residue. The Mg(2+) site is built by Asp26 and Gly53. IMP is bound by residues Asp26–Lys29 and Asn51–His54. His54 functions as the Proton donor in the catalytic mechanism. IMP is bound by residues Thr141, Arg155, Asn232, and Thr247. Thr307 provides a ligand contact to GTP. Residue Thr307 to Arg313 coordinates substrate. Arg311 provides a ligand contact to IMP. GTP is bound by residues Arg313, Lys339–Asp341, and Gly425–Gly427.

Belongs to the adenylosuccinate synthetase family. Homodimer. Mg(2+) is required as a cofactor.

The protein resides in the cytoplasm. The enzyme catalyses IMP + L-aspartate + GTP = N(6)-(1,2-dicarboxyethyl)-AMP + GDP + phosphate + 2 H(+). It functions in the pathway purine metabolism; AMP biosynthesis via de novo pathway; AMP from IMP: step 1/2. With respect to regulation, inhibited by hadacidin. Activated by fructose 1,6-bisphosphate. Plays an important role in the salvage pathway for purine nucleotide biosynthesis. Catalyzes the first committed step in the biosynthesis of AMP from IMP. The protein is Adenylosuccinate synthetase (Adss) of Plasmodium falciparum.